The sequence spans 142 residues: Hemoglobin subunit zeta (142 aa).

S2 carries the post-translational modification N-acetylserine. A Globin domain is found at 2–142 (SLMKNERAII…LSSILTEKYR (141 aa)). Position 29 is a phosphothreonine (T29). S53 bears the Phosphoserine mark. H59 lines the heme b pocket. S73 bears the Phosphoserine mark. Position 88 (H88) interacts with heme b.

This sequence belongs to the globin family. As to quaternary structure, heterotetramer of two zeta chains and beta-type chains.

In terms of biological role, the zeta chain is an alpha-type chain of mammalian embryonic hemoglobin. This Mus musculus (Mouse) protein is Hemoglobin subunit zeta (Hbz).